Here is a 159-residue protein sequence, read N- to C-terminus: 2-C-methyl-D-erythritol 2,4-cyclodiphosphate synthase (159 aa).

A divalent metal cation contacts are provided by Asp-10 and His-12. 4-CDP-2-C-methyl-D-erythritol 2-phosphate is bound by residues 10–12 and 36–37; these read DVH and HS. His-44 lines the a divalent metal cation pocket. 4-CDP-2-C-methyl-D-erythritol 2-phosphate is bound by residues 58–60, 63–67, 102–108, 134–137, Phe-141, and Arg-144; these read DIG, FPDTD, AQAPKMA, and TTTE.

The protein belongs to the IspF family. As to quaternary structure, homotrimer. Requires a divalent metal cation as cofactor.

It catalyses the reaction 4-CDP-2-C-methyl-D-erythritol 2-phosphate = 2-C-methyl-D-erythritol 2,4-cyclic diphosphate + CMP. It participates in isoprenoid biosynthesis; isopentenyl diphosphate biosynthesis via DXP pathway; isopentenyl diphosphate from 1-deoxy-D-xylulose 5-phosphate: step 4/6. In terms of biological role, involved in the biosynthesis of isopentenyl diphosphate (IPP) and dimethylallyl diphosphate (DMAPP), two major building blocks of isoprenoid compounds. Catalyzes the conversion of 4-diphosphocytidyl-2-C-methyl-D-erythritol 2-phosphate (CDP-ME2P) to 2-C-methyl-D-erythritol 2,4-cyclodiphosphate (ME-CPP) with a corresponding release of cytidine 5-monophosphate (CMP). The sequence is that of 2-C-methyl-D-erythritol 2,4-cyclodiphosphate synthase from Shewanella halifaxensis (strain HAW-EB4).